The primary structure comprises 100 residues: Putative antiporter subunit mnhF2 (100 aa).

3 consecutive transmembrane segments (helical) span residues Thr-6–Phe-26, Val-38–Ile-58, and Val-62–Ile-82.

Belongs to the CPA3 antiporters (TC 2.A.63) subunit F family. May form a heterooligomeric complex that consists of seven subunits: mnhA2, mnhB2, mnhC2, mnhD2, mnhE2, mnhF2 and mnhG2.

It is found in the cell membrane. The sequence is that of Putative antiporter subunit mnhF2 (mnhF2) from Staphylococcus haemolyticus (strain JCSC1435).